Here is a 359-residue protein sequence, read N- to C-terminus: Peptide chain release factor 1 (359 aa).

Position 235 is an N5-methylglutamine (Gln-235). Residues Lys-284–Phe-311 form a disordered region.

This sequence belongs to the prokaryotic/mitochondrial release factor family. Methylated by PrmC. Methylation increases the termination efficiency of RF1.

The protein resides in the cytoplasm. Its function is as follows. Peptide chain release factor 1 directs the termination of translation in response to the peptide chain termination codons UAG and UAA. The protein is Peptide chain release factor 1 of Bartonella quintana (strain Toulouse) (Rochalimaea quintana).